A 292-amino-acid polypeptide reads, in one-letter code: Probable ABC transporter permease protein PH1215 (292 aa).

A run of 6 helical transmembrane segments spans residues 10–30, 72–92, 106–126, 160–180, 215–235, and 261–281; these read IILF…FAVV, LLLI…LAIL, IYVL…AWMY, IIIA…LAGI, LSAF…IWVL, and FAYG…VVLP. The region spanning 68 to 284 is the ABC transmembrane type-1 domain; sequence LRNNLLLILL…ALVVVLPYLY (217 aa).

The protein belongs to the binding-protein-dependent transport system permease family. MalFG subfamily.

The protein resides in the cell membrane. Functionally, probably part of a binding-protein-dependent transport system PH1214/15/16. Probably responsible for the translocation of the substrate across the membrane. The polypeptide is Probable ABC transporter permease protein PH1215 (Pyrococcus horikoshii (strain ATCC 700860 / DSM 12428 / JCM 9974 / NBRC 100139 / OT-3)).